A 148-amino-acid chain; its full sequence is tRNA-specific adenosine deaminase (148 aa).

Residues 1-116 (MEQALKQARL…SNLRYFNSSA (116 aa)) form the CMP/dCMP-type deaminase domain. His48 lines the Zn(2+) pocket. Glu50 (proton donor) is an active-site residue. 2 residues coordinate Zn(2+): Cys78 and Cys81.

Belongs to the cytidine and deoxycytidylate deaminase family. As to quaternary structure, homodimer. It depends on Zn(2+) as a cofactor.

The catalysed reaction is adenosine(34) in tRNA + H2O + H(+) = inosine(34) in tRNA + NH4(+). Catalyzes the deamination of adenosine to inosine at the wobble position 34 of tRNA(Arg2). This is tRNA-specific adenosine deaminase from Rickettsia typhi (strain ATCC VR-144 / Wilmington).